The following is a 298-amino-acid chain: Protoheme IX farnesyltransferase (298 aa).

Helical transmembrane passes span 16–36, 45–65, 93–113, 114–134, 141–161, 172–192, 223–243, 244–264, and 277–297; these read VVAL…PDMP, ALGF…NQLL, VFAG…VNVI, TAVL…VYLK, IVIG…AVTG, SLLV…LAIF, VLLA…VFYL, GGAV…LNPP, and IVYL…LPWV.

The protein belongs to the UbiA prenyltransferase family. Protoheme IX farnesyltransferase subfamily.

It localises to the cell inner membrane. It catalyses the reaction heme b + (2E,6E)-farnesyl diphosphate + H2O = Fe(II)-heme o + diphosphate. Its pathway is porphyrin-containing compound metabolism; heme O biosynthesis; heme O from protoheme: step 1/1. Converts heme B (protoheme IX) to heme O by substitution of the vinyl group on carbon 2 of heme B porphyrin ring with a hydroxyethyl farnesyl side group. This chain is Protoheme IX farnesyltransferase, found in Xanthomonas oryzae pv. oryzae (strain MAFF 311018).